Reading from the N-terminus, the 197-residue chain is Ribonuclease HII (197 aa).

In terms of domain architecture, RNase H type-2 spans 11–197; sequence HLIAGVDEVG…FAPVKKILGL (187 aa). Residues aspartate 17, glutamate 18, and aspartate 109 each contribute to the a divalent metal cation site.

It belongs to the RNase HII family. Requires Mn(2+) as cofactor. Mg(2+) is required as a cofactor.

The protein resides in the cytoplasm. It catalyses the reaction Endonucleolytic cleavage to 5'-phosphomonoester.. Its function is as follows. Endonuclease that specifically degrades the RNA of RNA-DNA hybrids. This Actinobacillus pleuropneumoniae serotype 7 (strain AP76) protein is Ribonuclease HII.